A 204-amino-acid chain; its full sequence is Allatotropin (204 aa).

Positions 1–20 are cleaved as a signal peptide; that stretch reads MNLTMQLAVIVAVCLCLAEG. A propeptide spanning residues 21-35 is cleaved from the precursor; the sequence is APDVRLTRTKQQRPT. Residues 47–83 are disordered; that stretch reads RGFGKRDRPHPRAERDVDHQAPSARPNRGTPTFKSPT. Phe49 is modified (phenylalanine amide). Over residues 50–65 the composition is skewed to basic and acidic residues; the sequence is GKRDRPHPRAERDVDH. Positions 53–204 are excised as a propeptide; it reads DRPHPRAERD…LSSEELLRNF (152 aa).

In terms of tissue distribution, expressed extensively in the brain, frontal ganglion and terminal ganglion of the day 2 fifth instar larva (at protein level). Not expressed in the larval brain after day 4 of the fifth instar, or in the brain of the pupa or adult. Expression in the terminal ganglion is localized to cells in the posterior portion of the seventh neuromere of day 2 fifth instar larvae. In the pupa and adult expression is detected in the medial region of neuromere 6, the dorsal medial region of neuromere 7, and the posterior neuromere of the terminal ganglion (at protein level). In the frontal ganglion expression decreases in the wandering larvae and is present at low levels in during pupal ecdysis, but is not detected in the adult. Expressed in the subesophageal ganglion of day 2 fifth instar larva, but not at any time before or after day 2. Not expressed in the abdominal ganglia 1-6 of the day 2 fifth instar larva (at protein level). Expressed in the anterior neuromeres of the pterothoracic ganglion in pupa but not in adult (at protein level). Expressed in the unfused abdominal ganglia of day 10 pupae, and in pharate adult is expressed in median neurosecretory cells M1, M2 and M5, but not in median neurosecretory cells M3 and M4 (at protein level). Not expressed in the differentiated median neurosecretory cells M5 of the larva (at protein level). In the pharate adult brain isoform 3 is the predominant form, with lower levels of isoform 2 and very low levels of isoform 1 detected. In the pharate adult nerve cord isoform 3 is the predominant form, with lower levels of isoform 2 and no isoform 1 detected. In the pharate adult frontal ganglion isoform 3 is expressed, but not isoform 1 and isoform 2.

It is found in the secreted. Neuropeptide stimulator of juvenile hormone synthesis. Cardioregulatory neurohormone that increases heart beat rate in the adult but not in the larva. Inhibits active ion transport in the midgut of feeding fourth instar and day 2 fifth instar larva, but not in the midgut of pharate or wandering fifth instar larva. The protein is Allatotropin of Manduca sexta (Tobacco hawkmoth).